A 62-amino-acid chain; its full sequence is Sperm protamine P1 (62 aa).

The tract at residues M1 to Y62 is disordered.

This sequence belongs to the protamine P1 family. As to expression, testis.

It localises to the nucleus. The protein localises to the chromosome. Protamines substitute for histones in the chromatin of sperm during the haploid phase of spermatogenesis. They compact sperm DNA into a highly condensed, stable and inactive complex. This Lagostrophus fasciatus (Banded hare-wallaby) protein is Sperm protamine P1 (PRM1).